The sequence spans 416 residues: Homogentisate 1,2-dioxygenase (416 aa).

The active-site Proton acceptor is the H275. The Fe cation site is built by H318 and E324. 2 residues coordinate homogentisate: Y333 and H354. H354 provides a ligand contact to Fe cation.

The protein belongs to the homogentisate dioxygenase family. As to quaternary structure, hexamer; dimer of trimers. It depends on Fe cation as a cofactor.

The catalysed reaction is homogentisate + O2 = 4-maleylacetoacetate + H(+). Its pathway is amino-acid degradation; L-phenylalanine degradation; acetoacetate and fumarate from L-phenylalanine: step 4/6. Its function is as follows. Involved in the catabolism of homogentisate (2,5-dihydroxyphenylacetate or 2,5-OH-PhAc), a central intermediate in the degradation of phenylalanine and tyrosine. Catalyzes the oxidative ring cleavage of the aromatic ring of homogentisate to yield maleylacetoacetate. This chain is Homogentisate 1,2-dioxygenase, found in Legionella pneumophila (strain Corby).